The chain runs to 142 residues: Tail assembly protein E' (142 aa).

This sequence belongs to the mulikevirus tail assembly protein family.

Promotes tail assembly by creating a scaffold for the tail tube proteins. Tail assembly proteins E and E' would wrap the linear tape measure protein to create a tail assembly scaffold. This Enterobacteriaceae (Bacteriophage P2) protein is Tail assembly protein E'.